A 476-amino-acid polypeptide reads, in one-letter code: tRNA sulfurtransferase (476 aa).

Positions 54–156 (AENDIPLSKV…GKDALIYDKI (103 aa)) constitute a THUMP domain. ATP-binding positions include 174-175 (MV), lysine 256, glycine 278, and glutamine 287. The cysteines at positions 334 and 433 are disulfide-linked. The 83-residue stretch at 388 to 470 (NLEDAVFIDL…LSKQKGSVDE (83 aa)) folds into the Rhodanese domain. The active-site Cysteine persulfide intermediate is cysteine 433.

It belongs to the ThiI family.

It is found in the cytoplasm. It catalyses the reaction [ThiI sulfur-carrier protein]-S-sulfanyl-L-cysteine + a uridine in tRNA + 2 reduced [2Fe-2S]-[ferredoxin] + ATP + H(+) = [ThiI sulfur-carrier protein]-L-cysteine + a 4-thiouridine in tRNA + 2 oxidized [2Fe-2S]-[ferredoxin] + AMP + diphosphate. The enzyme catalyses [ThiS sulfur-carrier protein]-C-terminal Gly-Gly-AMP + S-sulfanyl-L-cysteinyl-[cysteine desulfurase] + AH2 = [ThiS sulfur-carrier protein]-C-terminal-Gly-aminoethanethioate + L-cysteinyl-[cysteine desulfurase] + A + AMP + 2 H(+). The protein operates within cofactor biosynthesis; thiamine diphosphate biosynthesis. Its function is as follows. Catalyzes the ATP-dependent transfer of a sulfur to tRNA to produce 4-thiouridine in position 8 of tRNAs, which functions as a near-UV photosensor. Also catalyzes the transfer of sulfur to the sulfur carrier protein ThiS, forming ThiS-thiocarboxylate. This is a step in the synthesis of thiazole, in the thiamine biosynthesis pathway. The sulfur is donated as persulfide by IscS. This Thermoplasma volcanium (strain ATCC 51530 / DSM 4299 / JCM 9571 / NBRC 15438 / GSS1) protein is tRNA sulfurtransferase.